A 961-amino-acid chain; its full sequence is MTAIEDILQITTDPSDTRGYSLLKSEEVPQGSTLGVDFIDTLLLYQLTENEKLDKPFEYLNDCFRRNQQQKRITKNKPNAESLHSTFQEIDRLVIGYGVVALQIENFCMNGAFINYITGIVSNVNSYTDFLSQIIQRAILEGTALDLLNAVFPTLLEYCNKHVSHFDLNESVIYNNVLTIFELFVTFKPIAEIFTKIDGFFADYSCKPQDFERKTILGPILSLSPIEAAVAIRNYGDNLLRSKQQTAMIHESLQAEHKVVIDRLFFIVDKLVRGSLNSRTDMISYFAHIANKNHLRRADHPPFKELSSNGFMSNITLLLVRFSQPFLDISYKKIDKIDANYFNNPSLFIDLSGETRLNSDFKEADAFYDKNRKTADSKPNFISDCFFLTLTYLHYGLGGTLSFEEKMGSEIKALKEEIEKVKKIAANHDVFARFITAQLSKMEKALKTTESLRFALQGFFAHRSLQLEVFDFICGASTFLIRVVDPEHEFPFKQIKLPLIPDQIGVENVDNADFLRAHAPVPFKYYPEFVVEGPVNYSLYISKYQTSPIFRNPRLGSFVEFTTMVLRCPELVSNPHLKGKLVQLLSVGAMPLTDNSPGFMMDIFEHDELVNKNLLYALLDFYVIVEKTGSSSQFYDKFNSRYSISIILEELYYKIPSYKNQLIWQSQNNADFFVRFVARMLNDLTFLLDEGLSNLAEVHNIQNELDNRARGAPPTREEEDKELQTRLASASRQAKSSCGLADKSMKLFEIYSKDIPAAFVTPEIVYRLASMLNYNLESLVGPKCGELKVKDPQSYSFNPKDLLKALTTVYINLSEQSEFISAVAKDERSFNRNLFVRAVDILGRKTGLASPEFIEKLLNFANKAEEQRKADEEEDLEYGDVPDEFLDPLMYTIMKDPVILPASKMNIDRSTIKAHLLSDSTDPFNRMPLKLEDVTPNEELRQKILCFKKQKKEEAKHKASE.

The region spanning 880–954 (DVPDEFLDPL…LCFKKQKKEE (75 aa)) is the U-box domain.

This sequence belongs to the ubiquitin conjugation factor E4 family. In terms of assembly, interacts with CDC48. Interacts with the ubiquitin-like domain of RAD23 and DSK2. Interacts with PEX29.

It is found in the cytoplasm. The protein resides in the nucleus. The catalysed reaction is S-ubiquitinyl-[E2 ubiquitin-conjugating enzyme]-L-cysteine + [acceptor protein]-L-lysine = [E2 ubiquitin-conjugating enzyme]-L-cysteine + N(6)-ubiquitinyl-[acceptor protein]-L-lysine.. Its pathway is protein modification; protein ubiquitination. E4 ubiquitin chain-elongation enzyme specifically involved in polyubiquitin chain assembly. Binds to CDC48 and elongates mono- and diubiquitinated ERAD substrates presented by the UFD1-NPL4-CDC48/p97 (UNC) AAA ATPase complex to a chain length of 4 to 6 ubiquitin moieties. Delivers these polyubiquitinated substrates to RAD23 and DSK2, which target them to the proteasome. Has E3 ubiquitin-protein ligase activity, accepting ubiquitin from its cognate E2 ubiquitin-conjugating enzyme UBC4. Enhances ubiquitination at 'Lys-48', but not at 'Lys-29' of the Ub moiety. Promotes ubiquitin chain elongation at 'Lys-48' on the DOA10 substrate PEX29. Also involved in the proteolytic processing of the ER-bound transcription factor SPT23. The polypeptide is E4 ubiquitin-protein ligase UFD2 (UFD2) (Saccharomyces cerevisiae (strain ATCC 204508 / S288c) (Baker's yeast)).